The sequence spans 146 residues: Anti-sigma F factor (146 aa).

It belongs to the anti-sigma-factor family.

The enzyme catalyses L-seryl-[protein] + ATP = O-phospho-L-seryl-[protein] + ADP + H(+). It catalyses the reaction L-threonyl-[protein] + ATP = O-phospho-L-threonyl-[protein] + ADP + H(+). Binds to sigma F and blocks its ability to form an RNA polymerase holoenzyme (E-sigma F). Phosphorylates SpoIIAA on a serine residue. This phosphorylation may enable SpoIIAA to act as an anti-anti-sigma factor that counteracts SpoIIAB and thus releases sigma F from inhibition. The sequence is that of Anti-sigma F factor from Bacillus anthracis (strain A0248).